A 151-amino-acid polypeptide reads, in one-letter code: Ribonuclease H (151 aa).

The RNase H type-1 domain maps to 1–143 (MEEYVIYTDG…VDRVARKEAA (143 aa)). Residues Asp9, Glu48, Asp71, and Asp135 each coordinate Mg(2+).

This sequence belongs to the RNase H family. In terms of assembly, monomer. Mg(2+) serves as cofactor.

The protein resides in the cytoplasm. It catalyses the reaction Endonucleolytic cleavage to 5'-phosphomonoester.. In terms of biological role, endonuclease that specifically degrades the RNA of RNA-DNA hybrids. This is Ribonuclease H from Neorickettsia sennetsu (strain ATCC VR-367 / Miyayama) (Ehrlichia sennetsu).